The following is a 359-amino-acid chain: 3-dehydroquinate synthase (359 aa).

NAD(+) contacts are provided by residues 71 to 76 (DGEQFK), 105 to 109 (GVIGD), 129 to 130 (TT), Lys142, Lys151, and 169 to 172 (CLQT). Zn(2+) contacts are provided by Glu184, His247, and His264.

It belongs to the sugar phosphate cyclases superfamily. Dehydroquinate synthase family. Requires NAD(+) as cofactor. It depends on Co(2+) as a cofactor. The cofactor is Zn(2+).

Its subcellular location is the cytoplasm. It carries out the reaction 7-phospho-2-dehydro-3-deoxy-D-arabino-heptonate = 3-dehydroquinate + phosphate. It participates in metabolic intermediate biosynthesis; chorismate biosynthesis; chorismate from D-erythrose 4-phosphate and phosphoenolpyruvate: step 2/7. Catalyzes the conversion of 3-deoxy-D-arabino-heptulosonate 7-phosphate (DAHP) to dehydroquinate (DHQ). This is 3-dehydroquinate synthase from Shewanella oneidensis (strain ATCC 700550 / JCM 31522 / CIP 106686 / LMG 19005 / NCIMB 14063 / MR-1).